A 102-amino-acid chain; its full sequence is Small ribosomal subunit protein uS10 (102 aa).

This sequence belongs to the universal ribosomal protein uS10 family. In terms of assembly, part of the 30S ribosomal subunit.

Its function is as follows. Involved in the binding of tRNA to the ribosomes. The sequence is that of Small ribosomal subunit protein uS10 from Opitutus terrae (strain DSM 11246 / JCM 15787 / PB90-1).